We begin with the raw amino-acid sequence, 261 residues long: Glucose 1-dehydrogenase 3 (261 aa).

Residue 11-35 participates in NAD(+) binding; sequence VITGGSTGLGRAMAVRFGQEEAKVV. Ser-145 contacts substrate. Tyr-158 (proton acceptor) is an active-site residue.

This sequence belongs to the short-chain dehydrogenases/reductases (SDR) family. In terms of assembly, homotetramer.

It catalyses the reaction D-glucose + NAD(+) = D-glucono-1,5-lactone + NADH + H(+). The catalysed reaction is D-glucose + NADP(+) = D-glucono-1,5-lactone + NADPH + H(+). This chain is Glucose 1-dehydrogenase 3 (gdhIII), found in Priestia megaterium (Bacillus megaterium).